Consider the following 32-residue polypeptide: Photosystem II reaction center protein T (32 aa).

The helical transmembrane segment at 3-23 threads the bilayer; the sequence is TLVYTFLLIGTLAVLFAAVFF.

The protein belongs to the PsbT family. PSII is composed of 1 copy each of membrane proteins PsbA, PsbB, PsbC, PsbD, PsbE, PsbF, PsbH, PsbI, PsbJ, PsbK, PsbL, PsbM, PsbT, PsbX, PsbY, PsbZ, Psb30/Ycf12, at least 3 peripheral proteins of the oxygen-evolving complex and a large number of cofactors. It forms dimeric complexes.

It is found in the plastid. Its subcellular location is the chloroplast thylakoid membrane. Its function is as follows. Found at the monomer-monomer interface of the photosystem II (PS II) dimer, plays a role in assembly and dimerization of PSII. PSII is a light-driven water plastoquinone oxidoreductase, using light energy to abstract electrons from H(2)O, generating a proton gradient subsequently used for ATP formation. This chain is Photosystem II reaction center protein T, found in Guillardia theta (Cryptophyte).